An 882-amino-acid polypeptide reads, in one-letter code: DNA mismatch repair protein MutS (882 aa).

629–636 (GPNMGGKS) serves as a coordination point for ATP.

This sequence belongs to the DNA mismatch repair MutS family.

Functionally, this protein is involved in the repair of mismatches in DNA. It is possible that it carries out the mismatch recognition step. This protein has a weak ATPase activity. This chain is DNA mismatch repair protein MutS, found in Ralstonia pickettii (strain 12J).